The following is a 167-amino-acid chain: Leptin (167 aa).

Positions 1 to 21 (MRCGPLYRFLWLWPYLSYVEA) are cleaved as a signal peptide. A disulfide bridge links C117 with C167.

The protein belongs to the leptin family.

The protein resides in the secreted. Key player in the regulation of energy balance and body weight control. Once released into the circulation, has central and peripheral effects by binding LEPR, found in many tissues, which results in the activation of several major signaling pathways. In the hypothalamus, acts as an appetite-regulating factor that induces a decrease in food intake and an increase in energy consumption by inducing anorexinogenic factors and suppressing orexigenic neuropeptides, also regulates bone mass and secretion of hypothalamo-pituitary-adrenal hormones. In the periphery, increases basal metabolism, influences reproductive function, regulates pancreatic beta-cell function and insulin secretion, is pro-angiogenic for endothelial cell and affects innate and adaptive immunity. In the arcuate nucleus of the hypothalamus, activates by depolarization POMC neurons inducing FOS and SOCS3 expression to release anorexigenic peptides and inhibits by hyperpolarization NPY neurons inducing SOCS3 with a consequent reduction on release of orexigenic peptides. In addition to its known satiety inducing effect, has a modulatory role in nutrient absorption. In the intestine, reduces glucose absorption by enterocytes by activating PKC and leading to a sequential activation of p38, PI3K and ERK signaling pathways which exerts an inhibitory effect on glucose absorption. Acts as a growth factor on certain tissues, through the activation of different signaling pathways increases expression of genes involved in cell cycle regulation such as CCND1, via JAK2-STAT3 pathway, or VEGFA, via MAPK1/3 and PI3K-AKT1 pathways. May also play an apoptotic role via JAK2-STAT3 pathway and up-regulation of BIRC5 expression. Pro-angiogenic, has mitogenic activity on vascular endothelial cells and plays a role in matrix remodeling by regulating the expression of matrix metalloproteinases (MMPs) and tissue inhibitors of metalloproteinases (TIMPs). In innate immunity, modulates the activity and function of neutrophils by increasing chemotaxis and the secretion of oxygen radicals. Increases phagocytosis by macrophages and enhances secretion of pro-inflammatory mediators. Increases cytotoxic ability of NK cells. Plays a pro-inflammatory role, in synergy with IL1B, by inducing NOS2 which promotes the production of IL6, IL8 and Prostaglandin E2, through a signaling pathway that involves JAK2, PI3K, MAP2K1/MEK1 and MAPK14/p38. In adaptive immunity, promotes the switch of memory T-cells towards T helper-1 cell immune responses. Increases CD4(+)CD25(-) T-cell proliferation and reduces autophagy during TCR (T-cell receptor) stimulation, through MTOR signaling pathway activation and BCL2 up-regulation. The sequence is that of Leptin (LEP) from Capra hircus (Goat).